Here is a 312-residue protein sequence, read N- to C-terminus: MAHSHSHADSHLPKDNNARRLLFAFIVTAGFMLLEVVGGILSGSLALLADAGHMLTDAAALLFALLVVQFSRRPPTVRHTFGWLRLTTLAAFVNAIALVVITLLIVWEAIERFYTPRPVAGNLMMVIAVAGLLANLFAFWILHRGSDEKNLNVRAAALHVMGDLLGSVGAIVAALIIIWTGWTPADPILSILVSVLVLRSAWRLLKDSVNELLEGAPVSLDINALQRHLSREIPEVRNVHHVHVWMVGEKPVMTLHAQVIPPHDHDALLERIQDFLMHEYHIAHATIQMEYQMCHGPDCHLNQTPSGHVHHH.

A run of 5 helical transmembrane segments spans residues 21 to 41 (LLFA…GGIL), 48 to 68 (LADA…LLVV), 90 to 110 (AAFV…WEAI), 123 to 143 (LMMV…WILH), and 164 to 184 (LLGS…GWTP).

The protein belongs to the cation diffusion facilitator (CDF) transporter (TC 2.A.4) family. SLC30A subfamily.

It localises to the cell inner membrane. Involved in zinc efflux across the cytoplasmic membrane, thus reducing zinc accumulation in the cytoplasm and rendering bacteria more resistant to zinc. It may contribute to zinc homeostasis at low concentrations of zinc. In Salmonella typhi, this protein is Zinc transporter ZitB.